Here is a 436-residue protein sequence, read N- to C-terminus: Hydroxycinnamoyltransferase (436 aa).

Residues His-154 and Asp-383 each act as proton acceptor in the active site.

It belongs to the plant acyltransferase family. As to expression, mostly expressed in stems, and, to a lower extent, in bulbs.

It functions in the pathway phenylpropanoid metabolism. Hydroxycinnamoyl transferase that catalyzes the transfer of an acyl from p-coumaryol-CoA to various acyl acceptors. Can use feruloyl-CoA and caffeoyl-CoA as acyl donors. This Narcissus pseudonarcissus (Daffodil) protein is Hydroxycinnamoyltransferase.